Consider the following 196-residue polypeptide: Imidazoleglycerol-phosphate dehydratase (196 aa).

This sequence belongs to the imidazoleglycerol-phosphate dehydratase family.

It is found in the cytoplasm. It catalyses the reaction D-erythro-1-(imidazol-4-yl)glycerol 3-phosphate = 3-(imidazol-4-yl)-2-oxopropyl phosphate + H2O. Its pathway is amino-acid biosynthesis; L-histidine biosynthesis; L-histidine from 5-phospho-alpha-D-ribose 1-diphosphate: step 6/9. In Ralstonia nicotianae (strain ATCC BAA-1114 / GMI1000) (Ralstonia solanacearum), this protein is Imidazoleglycerol-phosphate dehydratase.